Consider the following 447-residue polypeptide: Argininosuccinate synthase (447 aa).

Residues 17–25 (AFSGGLDTS) and A43 contribute to the ATP site. Y99 serves as a coordination point for L-citrulline. The ATP site is built by G129 and T131. Residues T131, N135, and D136 each coordinate L-aspartate. N135 serves as a coordination point for L-citrulline. D136 provides a ligand contact to ATP. 2 residues coordinate L-citrulline: R139 and S192. Residue D194 participates in ATP binding. The L-citrulline site is built by T201, E203, and E280.

The protein belongs to the argininosuccinate synthase family. Type 2 subfamily. In terms of assembly, homotetramer.

Its subcellular location is the cytoplasm. It carries out the reaction L-citrulline + L-aspartate + ATP = 2-(N(omega)-L-arginino)succinate + AMP + diphosphate + H(+). It participates in amino-acid biosynthesis; L-arginine biosynthesis; L-arginine from L-ornithine and carbamoyl phosphate: step 2/3. The chain is Argininosuccinate synthase from Escherichia coli (strain K12 / MC4100 / BW2952).